Here is a 140-residue protein sequence, read N- to C-terminus: Biopolymer transport protein exbD1 (140 aa).

Residues 1–16 are Cytoplasmic-facing; that stretch reads MAFSSGNSGGPMADIN. The chain crosses the membrane as a helical span at residues 17–37; that stretch reads VTPLVDVMLVLLIIFIITAPL. The Periplasmic portion of the chain corresponds to 38–140; that stretch reads MSHKVKVELP…GFVATKEKGQ (103 aa).

This sequence belongs to the ExbD/TolR family. As to quaternary structure, the accessory proteins ExbB and ExbD seem to form a complex with TonB.

The protein resides in the cell inner membrane. Functionally, involved in the TonB-dependent energy-dependent transport of various receptor-bound substrates. This is Biopolymer transport protein exbD1 (exbD1) from Xanthomonas campestris pv. campestris (strain B100).